Here is a 69-residue protein sequence, read N- to C-terminus: Protein transport protein Sec61 subunit gamma-3 (69 aa).

An N-acetylmethionine modification is found at methionine 1. Residues 1–32 (MEAIDSAIDPLRDFAKSSVRLVQRCHKPDRKE) lie on the Cytoplasmic side of the membrane. The chain crosses the membrane as a helical span at residues 33-61 (FTKVAVRTAIGFVVMGFVGFFVKLVFIPI). Topologically, residues 62–69 (NNIIVGSS) are extracellular.

The protein belongs to the SecE/SEC61-gamma family. In terms of assembly, heterotrimeric complex composed of SEC61-alpha, SEC61-beta and SEC61-gamma.

Its subcellular location is the endoplasmic reticulum membrane. Functionally, necessary for protein translocation in the endoplasmic reticulum. The sequence is that of Protein transport protein Sec61 subunit gamma-3 (SEC61G3) from Arabidopsis thaliana (Mouse-ear cress).